The primary structure comprises 244 residues: Tetraspanin-1 (244 aa).

4 helical membrane-spanning segments follow: residues 11–31, 67–87, 104–124, and 198–218; these read VLFF…AVGF, LIVV…TAVL, YLVL…AVLV, and ILLV…PILI.

It belongs to the tetraspanin (TM4SF) family.

Its subcellular location is the membrane. This Caenorhabditis elegans protein is Tetraspanin-1 (tsp-1).